Reading from the N-terminus, the 364-residue chain is tRNA 2-selenouridine synthase (364 aa).

The 124-residue stretch at L14–I137 folds into the Rhodanese domain. The active-site S-selanylcysteine intermediate is the C97.

Belongs to the SelU family. Monomer.

The enzyme catalyses 5-methylaminomethyl-2-thiouridine(34) in tRNA + selenophosphate + (2E)-geranyl diphosphate + H2O + H(+) = 5-methylaminomethyl-2-selenouridine(34) in tRNA + (2E)-thiogeraniol + phosphate + diphosphate. The catalysed reaction is 5-methylaminomethyl-2-thiouridine(34) in tRNA + (2E)-geranyl diphosphate = 5-methylaminomethyl-S-(2E)-geranyl-thiouridine(34) in tRNA + diphosphate. It catalyses the reaction 5-methylaminomethyl-S-(2E)-geranyl-thiouridine(34) in tRNA + selenophosphate + H(+) = 5-methylaminomethyl-2-(Se-phospho)selenouridine(34) in tRNA + (2E)-thiogeraniol. It carries out the reaction 5-methylaminomethyl-2-(Se-phospho)selenouridine(34) in tRNA + H2O = 5-methylaminomethyl-2-selenouridine(34) in tRNA + phosphate. In terms of biological role, involved in the post-transcriptional modification of the uridine at the wobble position (U34) of tRNA(Lys), tRNA(Glu) and tRNA(Gln). Catalyzes the conversion of 2-thiouridine (S2U-RNA) to 2-selenouridine (Se2U-RNA). Acts in a two-step process involving geranylation of 2-thiouridine (S2U) to S-geranyl-2-thiouridine (geS2U) and subsequent selenation of the latter derivative to 2-selenouridine (Se2U) in the tRNA chain. The sequence is that of tRNA 2-selenouridine synthase from Shigella flexneri.